We begin with the raw amino-acid sequence, 226 residues long: Octanoyltransferase (226 aa).

The 196-residue stretch at 31-226 folds into the BPL/LPL catalytic domain; it reads PETPDALWIC…SQKLGTYLAP (196 aa). Substrate-binding positions include 70–77, 159–161, and 172–174; these read RGGQVTFH, ALG, and GVA. The Acyl-thioester intermediate role is filled by Cys-190.

It belongs to the LipB family.

It is found in the cytoplasm. The enzyme catalyses octanoyl-[ACP] + L-lysyl-[protein] = N(6)-octanoyl-L-lysyl-[protein] + holo-[ACP] + H(+). Its pathway is protein modification; protein lipoylation via endogenous pathway; protein N(6)-(lipoyl)lysine from octanoyl-[acyl-carrier-protein]: step 1/2. Its function is as follows. Catalyzes the transfer of endogenously produced octanoic acid from octanoyl-acyl-carrier-protein onto the lipoyl domains of lipoate-dependent enzymes. Lipoyl-ACP can also act as a substrate although octanoyl-ACP is likely to be the physiological substrate. The sequence is that of Octanoyltransferase from Variovorax paradoxus (strain S110).